We begin with the raw amino-acid sequence, 133 residues long: NLP effector protein 14 (133 aa).

Residues M1 to D9 carry the Conserved undecapeptide motifI I motif. Positions G16–E22 match the Hepta-peptide GHRHDWE motif II motif.

Belongs to the Necrosis inducing protein (NPP1) family.

It is found in the secreted. In terms of biological role, secreted effector that contributes strongly to virulence during infection by P.capsici. Causes large necrotic areas in both host C.annuum and non-host N.benthamiana. The chain is NLP effector protein 14 from Phytophthora capsici.